Consider the following 177-residue polypeptide: Ribonuclease M5 (177 aa).

The Toprim domain maps to 5–99; the sequence is KQIIIVEGKT…NKTSKKIGIA (95 aa). Mg(2+) is bound by residues Glu-11, Asp-59, and Asp-61.

The protein belongs to the ribonuclease M5 family. Requires Mg(2+) as cofactor.

The protein resides in the cytoplasm. It catalyses the reaction Endonucleolytic cleavage of RNA, removing 21 and 42 nucleotides, respectively, from the 5'- and 3'-termini of a 5S-rRNA precursor.. Functionally, required for correct processing of both the 5' and 3' ends of 5S rRNA precursor. Cleaves both sides of a double-stranded region yielding mature 5S rRNA in one step. The polypeptide is Ribonuclease M5 (Mycoplasma mycoides subsp. mycoides SC (strain CCUG 32753 / NCTC 10114 / PG1)).